The following is a 398-amino-acid chain: Acetate kinase (398 aa).

Asn-7 is a binding site for Mg(2+). Lys-14 is a binding site for ATP. Arg-91 contacts substrate. Asp-148 serves as the catalytic Proton donor/acceptor. ATP-binding positions include His-208 to Gly-212, Asp-283 to Arg-285, and Gly-331 to His-335. Glu-386 is a binding site for Mg(2+).

Belongs to the acetokinase family. Homodimer. Requires Mg(2+) as cofactor. The cofactor is Mn(2+).

It localises to the cytoplasm. The catalysed reaction is acetate + ATP = acetyl phosphate + ADP. It participates in metabolic intermediate biosynthesis; acetyl-CoA biosynthesis; acetyl-CoA from acetate: step 1/2. Its function is as follows. Catalyzes the formation of acetyl phosphate from acetate and ATP. Can also catalyze the reverse reaction. The sequence is that of Acetate kinase from Clostridium botulinum (strain Eklund 17B / Type B).